The following is a 630-amino-acid chain: uncharacterized protein (630 aa).

2 consecutive transmembrane segments (helical) span residues 8-28 and 258-278; these read LFNMFRLLAAILVFTGLASAV and VDNSFLYTFAPYVFSSAPLVI. Residues 399 to 426 form a disordered region; the sequence is EETSKPTEQPSPADSTSTPAAPEKGAAS. A compositionally biased stretch (polar residues) spans 404 to 417; sequence PTEQPSPADSTSTP.

The protein belongs to the peptidase S1C family.

It localises to the cell membrane. This is an uncharacterized protein from Sinorhizobium fredii (strain NBRC 101917 / NGR234).